Consider the following 387-residue polypeptide: Alpha-maltose-1-phosphate synthase (387 aa).

Belongs to the glycosyltransferase group 1 family.

It carries out the reaction ADP-alpha-D-glucose + alpha-D-glucose 1-phosphate = alpha-maltose 1-phosphate + ADP + H(+). Its pathway is glycan biosynthesis; glycogen biosynthesis. In terms of biological role, involved in the biosynthesis of the maltose-1-phosphate (M1P) building block required for alpha-glucan production by the key enzyme GlgE. Catalyzes the formation of an alpha-1,4 linkage between glucose from ADP-glucose and glucose 1-phosphate (G1P) to yield maltose-1-phosphate (M1P). The polypeptide is Alpha-maltose-1-phosphate synthase (Mycolicibacterium smegmatis (strain ATCC 700084 / mc(2)155) (Mycobacterium smegmatis)).